We begin with the raw amino-acid sequence, 643 residues long: Nucleolar GTP-binding protein 1 (643 aa).

The region spanning 168 to 340 (RTLLICGYPN…VRNKACEKLL (173 aa)) is the OBG-type G domain. Residues 174–181 (GYPNVGKS), 220–224 (DTPGI), and 288–291 (NKTD) contribute to the GTP site. The tract at residues 568–643 (GDQEDSAPAG…KRGVGKTDFR (76 aa)) is disordered. Over residues 594–622 (MRSKAERMAKLERRERNRMARAGESDRHA) the composition is skewed to basic and acidic residues.

It belongs to the TRAFAC class OBG-HflX-like GTPase superfamily. OBG GTPase family. NOG subfamily.

It localises to the nucleus. Its subcellular location is the nucleolus. Functionally, involved in the biogenesis of the 60S ribosomal subunit. In Kluyveromyces lactis (strain ATCC 8585 / CBS 2359 / DSM 70799 / NBRC 1267 / NRRL Y-1140 / WM37) (Yeast), this protein is Nucleolar GTP-binding protein 1 (NOG1).